A 150-amino-acid polypeptide reads, in one-letter code: Galectin-2 (150 aa).

Residues 9–141 (NQVKLQNDFK…FSSPVTVDVH (133 aa)) form the Galectin domain. A carbohydrate contacts are provided by histidine 51, arginine 55, asparagine 64, glutamate 75, and arginine 77.

As to quaternary structure, homotetramer. Oligomerization is required for carbohydrate binding.

The protein localises to the secreted. The protein resides in the extracellular space. It is found in the extracellular matrix. Its subcellular location is the cell wall. It localises to the endomembrane system. Functionally, binds lactose. May play a role in fruiting body formation. Displays toxicity towards the nematode C.elegans by binding to a specific Gal-beta-1,4-Fuc-alpha-1,6 modification of N-glycan cores on C.elegans intestinal cells. The sequence is that of Galectin-2 (Cgl2) from Coprinopsis cinerea (Inky cap fungus).